A 165-amino-acid polypeptide reads, in one-letter code: Polcalcin Cup a 4 (165 aa).

EF-hand domains follow at residues glutamine 22–glutamate 57, valine 58–leucine 86, alanine 91–proline 126, and cysteine 127–aspartate 162. Residues aspartate 35, asparagine 37, aspartate 39, lysine 41, glutamate 46, aspartate 71, aspartate 73, aspartate 75, tyrosine 77, glutamate 82, aspartate 104, aspartate 106, asparagine 108, threonine 110, glutamate 115, aspartate 140, asparagine 142, aspartate 144, and glutamate 151 each contribute to the Ca(2+) site.

May exist as monomer and dimer. Expressed in mature pollen grains.

In Hesperocyparis arizonica (Arizona cypress), this protein is Polcalcin Cup a 4.